Consider the following 104-residue polypeptide: Co-chaperonin GroES 5 (104 aa).

Belongs to the GroES chaperonin family. Heptamer of 7 subunits arranged in a ring. Interacts with the chaperonin GroEL.

The protein localises to the cytoplasm. Functionally, together with the chaperonin GroEL, plays an essential role in assisting protein folding. The GroEL-GroES system forms a nano-cage that allows encapsulation of the non-native substrate proteins and provides a physical environment optimized to promote and accelerate protein folding. GroES binds to the apical surface of the GroEL ring, thereby capping the opening of the GroEL channel. The sequence is that of Co-chaperonin GroES 5 from Rhizobium meliloti (strain 1021) (Ensifer meliloti).